The primary structure comprises 354 residues: Protein RecA (354 aa).

Residue glycine 67–threonine 74 coordinates ATP. Residues glycine 331–phenylalanine 354 form a disordered region. Positions aspartate 343–phenylalanine 354 are enriched in acidic residues.

The protein belongs to the RecA family.

The protein resides in the cytoplasm. In terms of biological role, can catalyze the hydrolysis of ATP in the presence of single-stranded DNA, the ATP-dependent uptake of single-stranded DNA by duplex DNA, and the ATP-dependent hybridization of homologous single-stranded DNAs. It interacts with LexA causing its activation and leading to its autocatalytic cleavage. The sequence is that of Protein RecA from Shewanella frigidimarina (strain NCIMB 400).